The chain runs to 511 residues: Maturase K (511 aa).

The protein belongs to the intron maturase 2 family. MatK subfamily.

The protein resides in the plastid. It localises to the chloroplast. Functionally, usually encoded in the trnK tRNA gene intron. Probably assists in splicing its own and other chloroplast group II introns. This chain is Maturase K, found in Anchomanes difformis (Amorphophallus difformis).